Reading from the N-terminus, the 316-residue chain is Porphobilinogen deaminase (316 aa).

C245 is modified (S-(dipyrrolylmethanemethyl)cysteine).

This sequence belongs to the HMBS family. Monomer. The cofactor is dipyrromethane.

It catalyses the reaction 4 porphobilinogen + H2O = hydroxymethylbilane + 4 NH4(+). It participates in porphyrin-containing compound metabolism; protoporphyrin-IX biosynthesis; coproporphyrinogen-III from 5-aminolevulinate: step 2/4. Its pathway is porphyrin-containing compound metabolism; chlorophyll biosynthesis. Its function is as follows. Tetrapolymerization of the monopyrrole PBG into the hydroxymethylbilane pre-uroporphyrinogen in several discrete steps. The polypeptide is Porphobilinogen deaminase (Prochlorococcus marinus subsp. pastoris (strain CCMP1986 / NIES-2087 / MED4)).